The primary structure comprises 432 residues: MTLWVLGLNHQTAPMELRERASFVGDALPRALDSLRNLPNVNEAALLSTCNRTELYAETTNAQILLNWLEQHRPGLQNHLYQYRDAAAVRHLFRVATGLDSMVLGESQILGQVKDSWSMARTHGTLGNTLDRLFQHGFSVAKHARTNTRIGANPVSIASTAVRLAQDAFSPLNESTVLLIGTGETIQLAAKHLSEGRVQRLLIANRTHAKAQMLASQHGGYALPLTELNLHLAEADIIFSATAAPTPIVTQSNVESALHIRKRKPMLLFDLAIPRDIETEVGTLTDAYLYTIDDLERAVEENRRSRREAAETAEAIIELQVKRYMDTLQAHAHQAPLRRLRTFGTTTRDELLTRARQQLANGRPAEEVLEQLAHGLTNRLLHPPTAALREAALANNTELVRAAEQLFPEKPGYHHPTLQTTIVKTDETDPAS.

Substrate is bound by residues 49-52, Ser101, 106-108, and Gln112; these read TCNR and ESQ. Catalysis depends on Cys50, which acts as the Nucleophile. NADP(+) is bound at residue 181-186; the sequence is GTGETI. Residues 410 to 432 are disordered; the sequence is KPGYHHPTLQTTIVKTDETDPAS.

The protein belongs to the glutamyl-tRNA reductase family. As to quaternary structure, homodimer.

It carries out the reaction (S)-4-amino-5-oxopentanoate + tRNA(Glu) + NADP(+) = L-glutamyl-tRNA(Glu) + NADPH + H(+). Its pathway is porphyrin-containing compound metabolism; protoporphyrin-IX biosynthesis; 5-aminolevulinate from L-glutamyl-tRNA(Glu): step 1/2. In terms of biological role, catalyzes the NADPH-dependent reduction of glutamyl-tRNA(Glu) to glutamate 1-semialdehyde (GSA). The polypeptide is Glutamyl-tRNA reductase (Xylella fastidiosa (strain 9a5c)).